A 1034-amino-acid chain; its full sequence is MLKTRLKQSRAISRVVRRYACSHPISPNLDKYPVGLKLHGYEVTQTSPIPEFSLTAVSLKHTESGATHLHLDSPNDSNNVFSIAFKTNPPDNTGVPHILEHTTLCGSKKFPVRDPFFKMTNRSLSNFMNAMTGHDYTFYPFATTNSKDFENLMDVYLSSVFEPQLNHTDFLQEGWRIENQNVHDISSKLEFKGVVYNEMKGQYSNSAYYFYIKFLESIYPSLNNSGGDPKKIVDLSYEGLLEFHSKNYHPSNAKTFTYGKLPLEDSLSKISKYYESFEKKVSSVDVKQPIFSTDKSEIFDVTIPGPVDTMNGKETSEQYCTSITWNLGNPLDPNMQYDIFKWKILSSLLFDGHNSPFYQELIESGYGDDFSANTGLDSTTALLSFTVGLNYLTKQKVDNFNEKVMEIINNKIIPELSNEESSSYHGRIDAILHQIEIGFKRHKPDFGFGLLSSIVPSWVNGVDPIDTLQVEKILSHFKEDYKQNGLRIFKELLEKTLCNPHSQKFKFTMEPREDFTKQLVKDENLMIEKRVSELTEDNKKAIYEQNLELAKLQLEDQNTEVLPTLTIDDIPKRGDFYAIDLGQVNKKVVHERVVDTNGLVYANALKDISYLPTKLYKYLPLFNNCLTNLAGTENTPITELETKIQMLTGGITFSSKISTDPYNIEQLKLQYVLSGMALKEKSSSVYDLWLEILTTTKFDTSDEVLEKLSVLIKNMGQNQINNIADRGHSYAAAVSSSKLTPSKYISDIVSGLSQVQFVMELNSKLESEGKEYLAKEIIPILQEIQKYVLQGEFRYRLVGNQEIIVENEKLIEKFDKDISSNRPTLSLTVTDGLSALLNSFNYNHTSENVLVNLPFQVGYSSLGKIGSSYSSKDGASLQILSQLYSFKNLHSKIRESNGAYGGGLTYDGLNGTLNFYSYRDPNPVKSIQTFRDSLSYGLDANWNDKDLQEAKLRVFQSVDAPINISSQGASAFFENIDDYLRQERRENFLGTTLKDLRDVTEKYLVDNQNNLVTVIGDNEILNVDNKWQIRNFQV.

A mitochondrion-targeting transit peptide spans 1–26 (MLKTRLKQSRAISRVVRRYACSHPIS). H97 provides a ligand contact to Zn(2+). Residue E100 is the Proton acceptor of the active site. Residue H101 participates in Zn(2+) binding. E173 is an active-site residue. Residue E198 participates in Zn(2+) binding.

It belongs to the peptidase M16 family. PreP subfamily. In terms of assembly, monomer and homodimer; homodimerization is induced by binding of the substrate. The cofactor is Zn(2+).

It localises to the mitochondrion intermembrane space. The protein localises to the mitochondrion matrix. Its function is as follows. Degrades mitochondrial transit peptides after their cleavage in the intermembrane space or in the matrix, and presequence peptides; clearance of these peptides is required to keep the presequence processing machinery running. Preferentially cleaves the N-terminal side of paired basic amino acid residues. Also degrades other unstructured peptides. May function as an ATP-dependent peptidase as opposed to a metalloendopeptidase. The protein is Presequence protease, mitochondrial (CYM1) of Candida albicans (strain SC5314 / ATCC MYA-2876) (Yeast).